Here is a 158-residue protein sequence, read N- to C-terminus: SsrA-binding protein (158 aa).

It belongs to the SmpB family.

It is found in the cytoplasm. Required for rescue of stalled ribosomes mediated by trans-translation. Binds to transfer-messenger RNA (tmRNA), required for stable association of tmRNA with ribosomes. tmRNA and SmpB together mimic tRNA shape, replacing the anticodon stem-loop with SmpB. tmRNA is encoded by the ssrA gene; the 2 termini fold to resemble tRNA(Ala) and it encodes a 'tag peptide', a short internal open reading frame. During trans-translation Ala-aminoacylated tmRNA acts like a tRNA, entering the A-site of stalled ribosomes, displacing the stalled mRNA. The ribosome then switches to translate the ORF on the tmRNA; the nascent peptide is terminated with the 'tag peptide' encoded by the tmRNA and targeted for degradation. The ribosome is freed to recommence translation, which seems to be the essential function of trans-translation. The protein is SsrA-binding protein of Chloroflexus aggregans (strain MD-66 / DSM 9485).